Reading from the N-terminus, the 244-residue chain is Small ribosomal subunit protein uS2 (244 aa).

The tract at residues 224–244 (GQQGSDEAEEAEEAAEEVVAE) is disordered. The span at 229-244 (DEAEEAEEAAEEVVAE) shows a compositional bias: acidic residues.

This sequence belongs to the universal ribosomal protein uS2 family.

The sequence is that of Small ribosomal subunit protein uS2 from Desulfitobacterium hafniense (strain DSM 10664 / DCB-2).